Reading from the N-terminus, the 212-residue chain is Holliday junction branch migration complex subunit RuvA (212 aa).

The tract at residues 1–66 is domain I; it reads MISGLKGTLK…ERGQKLFGFL (66 aa). Residues 67–145 form a domain II region; sequence TEQDKEFFKV…KLELFLSGTS (79 aa). Residues 146–162 form a flexible linker region; that stretch reads KEPSISLSSFSETPEEA. The tract at residues 163-212 is domain III; the sequence is ALSRKREIAILGLVQLGFEEKTASKEVDKILKSSSPTDPGEIIREILKSL.

Belongs to the RuvA family. Homotetramer. Forms an RuvA(8)-RuvB(12)-Holliday junction (HJ) complex. HJ DNA is sandwiched between 2 RuvA tetramers; dsDNA enters through RuvA and exits via RuvB. An RuvB hexamer assembles on each DNA strand where it exits the tetramer. Each RuvB hexamer is contacted by two RuvA subunits (via domain III) on 2 adjacent RuvB subunits; this complex drives branch migration. In the full resolvosome a probable DNA-RuvA(4)-RuvB(12)-RuvC(2) complex forms which resolves the HJ.

It localises to the cytoplasm. Its function is as follows. The RuvA-RuvB-RuvC complex processes Holliday junction (HJ) DNA during genetic recombination and DNA repair, while the RuvA-RuvB complex plays an important role in the rescue of blocked DNA replication forks via replication fork reversal (RFR). RuvA specifically binds to HJ cruciform DNA, conferring on it an open structure. The RuvB hexamer acts as an ATP-dependent pump, pulling dsDNA into and through the RuvAB complex. HJ branch migration allows RuvC to scan DNA until it finds its consensus sequence, where it cleaves and resolves the cruciform DNA. In Leptospira borgpetersenii serovar Hardjo-bovis (strain JB197), this protein is Holliday junction branch migration complex subunit RuvA.